The sequence spans 166 residues: Transmembrane protein 278 (166 aa).

Over residues 1-15 (MSDQERETEEDEGGD) the composition is skewed to acidic residues. The disordered stretch occupies residues 1–28 (MSDQERETEEDEGGDPSDTAPMLPQRLP). Transmembrane regions (helical) follow at residues 39-59 (GWAS…WALA), 65-85 (LLLP…VVYL), and 111-131 (AAVI…ASAA).

This sequence belongs to the TMEM88 family.

Its subcellular location is the membrane. This chain is Transmembrane protein 278 (TMEM278), found in Bos taurus (Bovine).